Reading from the N-terminus, the 393-residue chain is Probable hydrolase sll0100 (393 aa).

The protein belongs to the peptidase M20 family.

The protein is Probable hydrolase sll0100 of Synechocystis sp. (strain ATCC 27184 / PCC 6803 / Kazusa).